The chain runs to 138 residues: Small ribosomal subunit protein uS11c (138 aa).

Residues 1-22 (MAKLLPRIGSRKNGRISSRKNA) form a disordered region. Over residues 9 to 22 (GSRKNGRISSRKNA) the composition is skewed to basic residues.

Belongs to the universal ribosomal protein uS11 family. Part of the 30S ribosomal subunit.

The protein resides in the plastid. It localises to the chloroplast. The sequence is that of Small ribosomal subunit protein uS11c from Populus alba (White poplar).